A 680-amino-acid chain; its full sequence is MDFRQAQRNLELIEEVAKNSQDSDEPIIDEDDLKEGKVEEEGEGTQIPSMPFSDDDDSDNNSKDTFKETPLELVDKEEAIEDKAPNDDEPVVSVEEKIATQEPEPEEQIFMNTQIQGQLDDIEQEDNLRSKLSNFKYASEESSSVQVIKRSNERKLKSKKITKPKLTKTSKRTKTNSNPSTQQTLDEIKISRSENILKLLSGKHGKVKDMINHQRNVEKKVKLVKNKNSNIITYDTYNSEEWLRIMKLILEKFPSANDMEVKQVYHYIYGEEQEQEYDNLWEASQIPLASMREEAYNEDNQIDRKIPNIPNSTQTRVEVMSLSQVMDDVSIIEESKKTTIDSEREMHIYEVPDSTDDEDSRIIRVISGSDEVASIVAESEFSTETESTSTQFFTADGNMVDGVIDLTQGSFKAVTKLFSPLKVDTLLSINKNKEKVQVAVTRTSTRFSNLGSGPVGLEETPRLAPDEAATPPTVISRSPQSTRTPQATRLPNPNITVMYEVNKCELQSSNSYQSRSSEDIRIVNQYDIDVRDSQDEYDSATEKCLIEFAVTNSATPSVQPEDVMNVISSQSVQKLRQDLKTIGLKPVRTKAKMIEALMAASQVLDTDNVDQEQTREALYDQLTSMIKQIPELVSKISRFEPITMEELVLQLIEVNPFADHIDESTIKEWADIQGITLRNN.

3 disordered regions span residues 15 to 92, 141 to 183, and 450 to 490; these read EVAK…EPVV, ESSS…STQQ, and LGSG…ATRL. Residues 22–33 are compositionally biased toward acidic residues; sequence DSDEPIIDEDDL. Basic and acidic residues predominate over residues 60-86; sequence NNSKDTFKETPLELVDKEEAIEDKAPN. Residues 156 to 174 show a composition bias toward basic residues; it reads LKSKKITKPKLTKTSKRTK. The span at 473–490 shows a compositional bias: polar residues; sequence TVISRSPQSTRTPQATRL.

The protein belongs to the SLX4 family. In terms of assembly, forms a heterodimer with SLX1. Post-translationally, phosphorylated in response to DNA damage.

The protein resides in the nucleus. Its function is as follows. Regulatory subunit of the SLX1-SLX4 structure-specific endonuclease that resolves DNA secondary structures generated during DNA repair and recombination. Has endonuclease activity towards branched DNA substrates, introducing single-strand cuts in duplex DNA close to junctions with ss-DNA. In Vanderwaltozyma polyspora (strain ATCC 22028 / DSM 70294 / BCRC 21397 / CBS 2163 / NBRC 10782 / NRRL Y-8283 / UCD 57-17) (Kluyveromyces polysporus), this protein is Structure-specific endonuclease subunit SLX4.